A 136-amino-acid polypeptide reads, in one-letter code: FK506-binding protein 2 (136 aa).

Positions 1–17 (MLSQIWILFTFMVCVIA) are cleaved as a signal peptide. The 90-residue stretch at 45–134 (GDMVSVHYTG…DFDVELVDIA (90 aa)) folds into the PPIase FKBP-type domain.

Belongs to the FKBP-type PPIase family. FKBP2 subfamily.

The protein resides in the endoplasmic reticulum. The enzyme catalyses [protein]-peptidylproline (omega=180) = [protein]-peptidylproline (omega=0). Inhibited by both FK506 and rapamycin. PPIases accelerate the folding of proteins. It catalyzes the cis-trans isomerization of proline imidic peptide bonds in oligopeptides. This Candida glabrata (strain ATCC 2001 / BCRC 20586 / JCM 3761 / NBRC 0622 / NRRL Y-65 / CBS 138) (Yeast) protein is FK506-binding protein 2 (FPR2).